A 139-amino-acid chain; its full sequence is MSSELFDPKPLVEIKEAYRKNKKFIRHHSDRYKRVKPSWRRPHGIDSKVRKRCKGEREMPSIKYKKPKEIRHLLPNGLRKVRIFNINDLTPLTSLNRFYCGEIAHAVGARKRIAIVNRAKELGICLLNGNARLIPEIEE.

The protein belongs to the eukaryotic ribosomal protein eL32 family.

The sequence is that of Large ribosomal subunit protein eL32 (RPL32) from Encephalitozoon cuniculi (strain GB-M1) (Microsporidian parasite).